A 196-amino-acid chain; its full sequence is O-methyltransferase dpmpI (196 aa).

S-adenosyl-L-methionine contacts are provided by residues 127-128 (GG), aspartate 152, and 174-175 (SF). The interval 166–196 (NGIEAVPHSFEDPQPIKSKSPRLDNLARERL) is disordered. The span at 186–196 (PRLDNLARERL) shows a compositional bias: basic and acidic residues.

The protein belongs to the class I-like SAM-binding methyltransferase superfamily. Cation-independent O-methyltransferase family.

It functions in the pathway secondary metabolite biosynthesis; terpenoid biosynthesis. Functionally, O-methyltransferase; part of the gene cluster that mediates the biosynthesis of diterpenoid pyrones. The first step of the pathway is the synthesis of the alpha-pyrone moiety by the polyketide synthase dpmpA via condensation of one acetyl-CoA starter unit with 3 malonyl-CoA units and 2 methylations. The alpha-pyrone is then combined with geranylgeranyl pyrophosphate (GGPP) formed by the GGPP synthase dpmpD through the action of the prenyltransferase dpmpC to yield a linear alpha-pyrone diterpenoid. Subsequent steps in the diterpenoid pyrone biosynthetic pathway involve the decalin core formation, which is initiated by the epoxidation of the C10-C11 olefin by the FAD-dependent oxidoreductase dpmpE, and is followed by a cyclization cascade catalyzed by the terpene cyclase dpmpB. The short chain dehydrogenase/reductase dpmpG then oxidizes the 8S hydroxy group to a ketone and the short chain dehydrogenase/reductase dpmpH reduces the ketone to the 8R hydroxy group to yield higginsianin B. Higginsianin B is further methylated by the methyltransferase dpmpI to produce the intermediate named FDDP B. The cytochrome P450 monooxygenase dpmpJ then oxidizes the C-26 methyl to primary alcohol, producing the final diterpenoid pyrone with a C-26 primary alcohol on the gamma-pyrone moiety named FDDP C. This Macrophomina phaseolina (strain MS6) (Charcoal rot fungus) protein is O-methyltransferase dpmpI.